The chain runs to 280 residues: Protein phosphatase 1 regulatory subunit 3B-A (280 aa).

Residues 58–61 (RVSF) carry the PP1-binding motif motif. The region spanning 121–229 (RNRLQADSVC…SNKSLNYKIA (109 aa)) is the CBM21 domain.

In terms of assembly, interacts with glycogen, PPP1CC catalytic subunit of PP1 and PYGL. Associates with glycogen particles. Forms complexes with debranching enzyme, glycogen phosphorylase, glycogen synthase and phosphorylase kinase which is necessary for its regulation of PP1 activity.

Functionally, acts as a glycogen-targeting subunit for phosphatase PP1. Facilitates interaction of the PP1 with enzymes of the glycogen metabolism and regulates its activity. Suppresses the rate at which PP1 dephosphorylates (inactivates) glycogen phosphorylase and enhances the rate at which it activates glycogen synthase and therefore limits glycogen breakdown. The polypeptide is Protein phosphatase 1 regulatory subunit 3B-A (ppp1r3b-a) (Xenopus laevis (African clawed frog)).